Reading from the N-terminus, the 101-residue chain is Apolipoprotein C-II (101 aa).

The signal sequence occupies residues 1 to 22; that stretch reads MGARHLLALLLVLLVLGFEVQG. The lipid binding stretch occupies residues 66–74; it reads TMDEKIRDM. The segment at 78-101 is lipoprotein lipase cofactor; it reads STAAVSTYVGIFTDQLLSLLKGDE.

It belongs to the apolipoprotein C2 family. Post-translationally, proapolipoprotein C-II is synthesized as a sialic acid containing glycoprotein which is subsequently desialylated prior to its proteolytic processing. In terms of processing, proapolipoprotein C-II, the major form found in plasma undergoes proteolytic cleavage of its N-terminal hexapeptide to generate apolipoprotein C-II, which occurs as the minor form in plasma.

The protein localises to the secreted. Its function is as follows. Component of chylomicrons, very low-density lipoproteins (VLDL), low-density lipoproteins (LDL), and high-density lipoproteins (HDL) in plasma. Plays an important role in lipoprotein metabolism as an activator of lipoprotein lipase. Both proapolipoprotein C-II and apolipoprotein C-II can activate lipoprotein lipase. The sequence is that of Apolipoprotein C-II (APOC2) from Tapirus indicus (Asiatic tapir).